Here is a 376-residue protein sequence, read N- to C-terminus: Erythronate-4-phosphate dehydrogenase (376 aa).

Substrate is bound by residues Ser45 and Thr66. NAD(+) is bound by residues 126-127, Asp146, Thr174, 201-203, and Asp227; these read QV and ASR. Arg203 is a catalytic residue. Residue Glu232 is part of the active site. His249 functions as the Proton donor in the catalytic mechanism. An NAD(+)-binding site is contributed by Gly252. Residue Tyr253 coordinates substrate.

Belongs to the D-isomer specific 2-hydroxyacid dehydrogenase family. PdxB subfamily. As to quaternary structure, homodimer.

Its subcellular location is the cytoplasm. The catalysed reaction is 4-phospho-D-erythronate + NAD(+) = (R)-3-hydroxy-2-oxo-4-phosphooxybutanoate + NADH + H(+). The protein operates within cofactor biosynthesis; pyridoxine 5'-phosphate biosynthesis; pyridoxine 5'-phosphate from D-erythrose 4-phosphate: step 2/5. Catalyzes the oxidation of erythronate-4-phosphate to 3-hydroxy-2-oxo-4-phosphonooxybutanoate. This is Erythronate-4-phosphate dehydrogenase from Ectopseudomonas mendocina (strain ymp) (Pseudomonas mendocina).